The chain runs to 215 residues: Dual specificity phosphatase 29 (215 aa).

Residues 53 to 201 form the Tyrosine-protein phosphatase domain; the sequence is HVNEVWPRLH…LRELDKQLVK (149 aa). 145-152 contributes to the substrate binding site; that stretch reads HCAMGRSR. Catalysis depends on Cys146, which acts as the Phosphocysteine intermediate.

The protein belongs to the protein-tyrosine phosphatase family. Non-receptor class dual specificity subfamily. In terms of assembly, homodimer. Interacts with PRKAA2.

It localises to the cytoplasm. The protein localises to the nucleus. It catalyses the reaction O-phospho-L-tyrosyl-[protein] + H2O = L-tyrosyl-[protein] + phosphate. The enzyme catalyses O-phospho-L-seryl-[protein] + H2O = L-seryl-[protein] + phosphate. It carries out the reaction O-phospho-L-threonyl-[protein] + H2O = L-threonyl-[protein] + phosphate. Dual specificity phosphatase able to dephosphorylate phosphotyrosine, phosphoserine and phosphothreonine residues within the same substrate, with a preference for phosphotyrosine as a substrate. Involved in the modulation of intracellular signaling cascades. In skeletal muscle regulates systemic glucose homeostasis by activating, AMPK, an energy sensor protein kinase. Affects MAP kinase signaling though modulation of the MAPK1/2 cascade in skeletal muscle promoting muscle cell differentiation, development and atrophy. This is Dual specificity phosphatase 29 (Dusp29) from Rattus norvegicus (Rat).